The primary structure comprises 312 residues: Ribosomal RNA small subunit methyltransferase H (312 aa).

Residues 35 to 37 (GGH), Asp-55, Phe-79, Asp-101, and Gln-108 contribute to the S-adenosyl-L-methionine site. Residues 286–306 (LKPSEHEVNENSRSRSSVLRV) form a disordered region. Residues 287-298 (KPSEHEVNENSR) show a composition bias toward basic and acidic residues.

This sequence belongs to the methyltransferase superfamily. RsmH family.

The protein resides in the cytoplasm. It catalyses the reaction cytidine(1402) in 16S rRNA + S-adenosyl-L-methionine = N(4)-methylcytidine(1402) in 16S rRNA + S-adenosyl-L-homocysteine + H(+). Its function is as follows. Specifically methylates the N4 position of cytidine in position 1402 (C1402) of 16S rRNA. This chain is Ribosomal RNA small subunit methyltransferase H, found in Aeromonas hydrophila subsp. hydrophila (strain ATCC 7966 / DSM 30187 / BCRC 13018 / CCUG 14551 / JCM 1027 / KCTC 2358 / NCIMB 9240 / NCTC 8049).